The chain runs to 1140 residues: MTTAVERKYINIRKRLDQLGYRQTLTVECLPLVEKLFSDLVHTTESLRQSKLSAVKAEKESANFDFVLEPYKLENARLSRENNELYLELMKLREHSDQHVKELKTSLKKCARETADLKFLNNQYAHKLKLLEKESKAKNERIQQLQEKNLHAVVQTPGGKKRSIAFRRQRMQIDEPVPPSEVSSYPVPQPDDPYIADLLQVADNRIQELQQEVHQLQEKLAMMESGVRDYSKQIELREREIERLSVALDGGRSPDVLSLESRNKTNEKLIAHLNIQVDFLQQANKDLEKRIRELMETKETVTSEVVNLSNKNEKLCQELTEIDQLAQQLERHKEEVLETADKELGEAKKEIKRKLSEMQDLEETMAKLQLELNLCQKEKERLSDELLVKSDLETVVHQLEQEKQRLSKKVESFAVTERQLTLEVERMRLEHGIKRRDRSPSRLDTFLKGIEEERDYYKKELERLQHIIQRRSCSTSYSAREKSSIFRTPEKGDYNSEIHQITRERDELQRMLERFEKYMEDIQSNVKLLTAERDKLSVLYNEAQEELSALRKESTQTTAPHNIVSLMEKEKELALSDLRRIMAEKEALREKLEHIEEVSLFGKSELEKTIEHLTCVNHQLESEKYELKSKVLIMKETIESLENKLKVQAQKFSHVAGDSSHQKTEVNSLRIVNEQLQRSVDDYQHRLSIKRGELESAQAQIKILEEKIDELNLKMTSQDEEAHVMKKTIGVIDKEKDFLQETVDEKTEKIANLQENLANKEKAVAQMKIMISECESSVNQLKETLVNRDREINSLRRQLDAAHKELDEVGRSREIAFKENRRLQDDLATMARENQEISLELEAAVQEKEEMKSRVHKYITEVSRWESLMAAKEKENQDLLDRFQMLHNRAEDWEVKAHQAEGESSSVRLELLSIDTERRHLRERVELLEKEIQEHINAHHAYESQISSMAKAMSRLEEELRHQEDEKATVLNDLSSLRELCIKLDSGKDIMTQQLNSKNLEFERVVVELENVKSESDLLKKQLSNERHTVKNLESLLATNRDKEFHSHLTSHEKDTEIQLLKEKLTLSESKLTSQSRENTMLRAKVAQLQTDYDALKRQISTERYERERAIQEMRRHGLATPPLSSTLRSPSHSPEHRNV.

Residues 11-64 (NIRKRLDQLGYRQTLTVECLPLVEKLFSDLVHTTESLRQSKLSAVKAEKESANF) are homodimerization. Coiled coils occupy residues 75 to 151 (NARL…KNLH) and 199 to 416 (LQVA…FAVT). Phosphoserine is present on residues Ser383 and Ser439. 3 coiled-coil regions span residues 447–644 (LKGI…LENK), 668–1036 (SLRI…LESL), and 1079–1113 (NTML…AIQE). At Ser688 the chain carries Phosphoserine. The segment at 1114–1140 (MRRHGLATPPLSSTLRSPSHSPEHRNV) is disordered. Residue Thr1121 is modified to Phosphothreonine. The segment covering 1121 to 1133 (TPPLSSTLRSPSH) has biased composition (low complexity). Ser1130 carries the phosphoserine modification.

The protein belongs to the CEP135/TSGA10 family. As to quaternary structure, homodimer. Interacts with DCTN2. Interacts with CEP250.

It localises to the cytoplasm. The protein localises to the cytoskeleton. It is found in the microtubule organizing center. Its subcellular location is the centrosome. The protein resides in the centriole. Centrosomal microtubule-binding protein involved in centriole biogenesis. Acts as a scaffolding protein during early centriole biogenesis. Required for the targeting of centriole satellite proteins to centrosomes such as of PCM1, SSX2IP and CEP290 and recruitment of WRAP73 to centrioles. Also required for centriole-centriole cohesion during interphase by acting as a platform protein for CEP250 at the centriole. Required for the recruitment of CEP295 to the proximal end of new-born centrioles at the centriolar microtubule wall during early S phase in a PLK4-dependent manner. The sequence is that of Centrosomal protein of 135 kDa from Homo sapiens (Human).